The sequence spans 405 residues: Lariat debranching enzyme (405 aa).

C11, H13, D40, and N85 together coordinate a divalent metal cation. The interval 125–159 (SGIWKEWDFNKQRPDWNDLENNNWKANIRNLYHVR) is lariat recognition loop. Positions 179, 231, and 233 each coordinate a divalent metal cation. The interval 242 to 277 (HNKRSHEPPNKSTSKTKKNNNEIDLDLSSDEDERSG) is disordered. Acidic residues predominate over residues 264–274 (IDLDLSSDEDE). Phosphoserine is present on S269.

This sequence belongs to the lariat debranching enzyme family. The cofactor is Fe(2+). Zn(2+) is required as a cofactor. It depends on Mn(2+) as a cofactor.

Its subcellular location is the nucleus. It localises to the cytoplasm. Its activity is regulated as follows. Active in presence of diverse metals including Fe(2+), Zn(2+) and Mn(2+). Binds two metal cations in two adjacent alpha and beta metal-binding pockets. The activity is the highest with Fe(2+) bound to the 2 metal-binding sites. Activity is low with Zn(2+) and Mn(2+). In terms of biological role, cleaves the 2'-5' phosphodiester linkage at the branch point of lariat intron pre-mRNAs after splicing and converts them into linear molecules that are subsequently degraded, thereby facilitating ribonucleotide turnover. It also participates in Ty1 retrovirus-like transposition via an RNA lariat intermediate in cDNA synthesis. The protein is Lariat debranching enzyme (DBR1) of Saccharomyces cerevisiae (strain ATCC 204508 / S288c) (Baker's yeast).